A 143-amino-acid chain; its full sequence is S-adenosylmethionine decarboxylase proenzyme (143 aa).

Residue Ser66 is the Schiff-base intermediate with substrate; via pyruvic acid of the active site. Ser66 bears the Pyruvic acid (Ser); by autocatalysis mark. The active-site Proton acceptor; for processing activity is the His71. Cys86 functions as the Proton donor; for catalytic activity in the catalytic mechanism.

It belongs to the prokaryotic AdoMetDC family. Type 1 subfamily. Heterotetramer of two alpha and two beta chains arranged as a dimer of alpha/beta heterodimers. The cofactor is pyruvate. Is synthesized initially as an inactive proenzyme. Formation of the active enzyme involves a self-maturation process in which the active site pyruvoyl group is generated from an internal serine residue via an autocatalytic post-translational modification. Two non-identical subunits are generated from the proenzyme in this reaction, and the pyruvate is formed at the N-terminus of the alpha chain, which is derived from the carboxyl end of the proenzyme. The post-translation cleavage follows an unusual pathway, termed non-hydrolytic serinolysis, in which the side chain hydroxyl group of the serine supplies its oxygen atom to form the C-terminus of the beta chain, while the remainder of the serine residue undergoes an oxidative deamination to produce ammonia and the pyruvoyl group blocking the N-terminus of the alpha chain.

It carries out the reaction S-adenosyl-L-methionine + H(+) = S-adenosyl 3-(methylsulfanyl)propylamine + CO2. The protein operates within amine and polyamine biosynthesis; S-adenosylmethioninamine biosynthesis; S-adenosylmethioninamine from S-adenosyl-L-methionine: step 1/1. Functionally, catalyzes the decarboxylation of S-adenosylmethionine to S-adenosylmethioninamine (dcAdoMet), the propylamine donor required for the synthesis of the polyamines spermine and spermidine from the diamine putrescine. The sequence is that of S-adenosylmethionine decarboxylase proenzyme from Thermococcus kodakarensis (strain ATCC BAA-918 / JCM 12380 / KOD1) (Pyrococcus kodakaraensis (strain KOD1)).